Consider the following 949-residue polypeptide: MDKTYSPAAIEQDLYQQWEDKGYFKPSGKGDPYSIMIPPPNVTGSLHMGHAFQHTIMDTLTRYQRMDGLNTLWQVGSDHAGIATQMVVERQLAAQGQTRQELGRDAFIDKIWEWKEQSGGTITQQMRRLGDSVDWDRERFTMDEGLSDAVREVFVKLHEDNLIYRGKRLVNWDPALQTAISDLEVENKEQQGYIWYLRYPLADGEKTEDGKDHLVVATTRPETMLGDVCVAVHPDDERFAHLVGKFLELPIVNRRIPIVADHHVDSEFGTGCVKVTPAHDFNDYEIGKRHQTGMISIFDDTAHVMAKAGLYTSTGETLEELNGFNGILPEQYAGKERFEARKQLVAEFDELGLLEKIEKHTNKIPYGDRGGVPIEPHLTDQWYVRVEPMAKQATAAVEDGRIEFVPKQYENMYFSWMRDIQDWCISRQLWWGHRIPAWYDEQGNVYVGRTEEEVREKHNLGDTPLQQDEDVLDTWFSSALWTFSTLGWPKNTEDLKTFHPTDVLVTGFDIIFFWVARMIMMTMHFMKDEEGQPQVPFKKVYVTGLIRDEEGQKMSKSKGNVLDPLDMIDGISADELVAKRTANLMQPKMREKIEKRTRKEFPEGITAHGTDALRFTLTALASTGRDINWDMKRLEGYRNFCNKLWNASRYVLMSTEEHDCGLENDDMTLSLADEWIIARFNSTVKDFRQALDTYRFDQAAAIAYEFTWNQFCDWYLELTKPVLQNGTESQQRGTRHTLVNVLEQLLRLLHPVMPYITETIWQRVKPLVGNTDDTIMLQPFPRVEDNVSHQAMQDMEWLKRVILAIRNIRGEMDLSPNKPLPLLLSNADAMAKGRIQNNESFLSSLAKLESIEFIESDDDAPASMTALVDTLKLHIPMAGLIDKEAELQRLQKSIEKANKEWQRLNGKLSNDNFVSKAPEAVIAKEREKLSEAETTLKQLQEQQDKIKAL.

The 'HIGH' region motif lies at 40-50 (PNVTGSLHMGH). Residues 553–557 (KMSKS) carry the 'KMSKS' region motif. Lysine 556 contacts ATP. The stretch at 877–949 (MAGLIDKEAE…QEQQDKIKAL (73 aa)) forms a coiled coil.

The protein belongs to the class-I aminoacyl-tRNA synthetase family. ValS type 1 subfamily. As to quaternary structure, monomer.

The protein resides in the cytoplasm. The catalysed reaction is tRNA(Val) + L-valine + ATP = L-valyl-tRNA(Val) + AMP + diphosphate. Functionally, catalyzes the attachment of valine to tRNA(Val). As ValRS can inadvertently accommodate and process structurally similar amino acids such as threonine, to avoid such errors, it has a 'posttransfer' editing activity that hydrolyzes mischarged Thr-tRNA(Val) in a tRNA-dependent manner. The chain is Valine--tRNA ligase from Idiomarina loihiensis (strain ATCC BAA-735 / DSM 15497 / L2-TR).